The sequence spans 107 residues: MSKLFEVLERLAATIETRKGGDPTSSYTAKLLNDPALAAKKLGEEAVETVIAAVAQGPDALASESADLLYHWLVLVAASDVSLDAVADKLAAREGTSGLAEKAARPS.

This sequence belongs to the PRA-PH family.

The protein resides in the cytoplasm. The catalysed reaction is 1-(5-phospho-beta-D-ribosyl)-ATP + H2O = 1-(5-phospho-beta-D-ribosyl)-5'-AMP + diphosphate + H(+). The protein operates within amino-acid biosynthesis; L-histidine biosynthesis; L-histidine from 5-phospho-alpha-D-ribose 1-diphosphate: step 2/9. This Caulobacter sp. (strain K31) protein is Phosphoribosyl-ATP pyrophosphatase.